The chain runs to 420 residues: Glutamyl-tRNA reductase (420 aa).

Substrate is bound by residues 49–52, S109, 114–116, and Q120; these read TCNR and EPQ. Catalysis depends on C50, which acts as the Nucleophile. 189 to 194 contacts NADP(+); that stretch reads GAGETI.

The protein belongs to the glutamyl-tRNA reductase family. Homodimer.

The enzyme catalyses (S)-4-amino-5-oxopentanoate + tRNA(Glu) + NADP(+) = L-glutamyl-tRNA(Glu) + NADPH + H(+). It functions in the pathway porphyrin-containing compound metabolism; protoporphyrin-IX biosynthesis; 5-aminolevulinate from L-glutamyl-tRNA(Glu): step 1/2. Functionally, catalyzes the NADPH-dependent reduction of glutamyl-tRNA(Glu) to glutamate 1-semialdehyde (GSA). This chain is Glutamyl-tRNA reductase, found in Edwardsiella ictaluri (strain 93-146).